A 119-amino-acid chain; its full sequence is C-X-C motif chemokine 17 (119 aa).

Positions 1–21 are cleaved as a signal peptide; sequence MKVLISSLLLLLPLMLMSMVS. Disulfide bonds link Cys-75–Cys-103 and Cys-77–Cys-110. The interval 81 to 100 is disordered; sequence KGNVKKTRHQRHHRKPNKHS. Residues 82 to 100 are compositionally biased toward basic residues; sequence GNVKKTRHQRHHRKPNKHS.

This sequence belongs to the intercrine alpha (chemokine CxC) family. In terms of processing, likely to undergo an endoproteolytic process to form a four-cysteine-containing mature peptide with a canonical CXC chemokine scaffold after secretion. Detected in trachea, stomach, lung and skeletal muscle. Detected in intestine and in normal and asthmatic lung (at protein level). Breast tumors showed 3- to 24-fold up-regulation.

The protein localises to the secreted. Its function is as follows. Chemokine that acts as a chemoattractant for monocytes, macrophages and dendritic cells. Plays a role in angiogenesis and possibly in the development of tumors. Acts as an anti-inflammatory in the stomach. May play a role in the innate defense against infections. Activates the C-X-C chemokine receptor GPR35 to induce a rapid and transient rise in the level of intracellular calcium ions. Functionally, seems to exhibit much higher chemoattractant potency on monocytes and macrophages than 6-Cys CXCL17. In Homo sapiens (Human), this protein is C-X-C motif chemokine 17 (CXCL17).